A 291-amino-acid chain; its full sequence is ATP synthase gamma chain (291 aa).

This sequence belongs to the ATPase gamma chain family. As to quaternary structure, F-type ATPases have 2 components, CF(1) - the catalytic core - and CF(0) - the membrane proton channel. CF(1) has five subunits: alpha(3), beta(3), gamma(1), delta(1), epsilon(1). CF(0) has three main subunits: a, b and c.

It is found in the cell inner membrane. Produces ATP from ADP in the presence of a proton gradient across the membrane. The gamma chain is believed to be important in regulating ATPase activity and the flow of protons through the CF(0) complex. The protein is ATP synthase gamma chain of Neisseria gonorrhoeae (strain ATCC 700825 / FA 1090).